A 223-amino-acid chain; its full sequence is Small ribosomal subunit protein uS3 (223 aa).

In terms of domain architecture, KH type-2 spans 39–117; the sequence is IREHLRKKPS…RPELNAKLVA (79 aa).

Belongs to the universal ribosomal protein uS3 family. As to quaternary structure, part of the 30S ribosomal subunit. Forms a tight complex with proteins S10 and S14.

Its function is as follows. Binds the lower part of the 30S subunit head. Binds mRNA in the 70S ribosome, positioning it for translation. This Chlamydia caviae (strain ATCC VR-813 / DSM 19441 / 03DC25 / GPIC) (Chlamydophila caviae) protein is Small ribosomal subunit protein uS3.